The primary structure comprises 444 residues: Argininosuccinate synthase (444 aa).

Residues alanine 18–serine 26 and alanine 44 contribute to the ATP site. An L-citrulline-binding site is contributed by tyrosine 100. Residues glycine 130 and threonine 132 each coordinate ATP. Residues threonine 132, asparagine 136, and aspartate 137 each contribute to the L-aspartate site. An L-citrulline-binding site is contributed by asparagine 136. Aspartate 137 is a binding site for ATP. Positions 140 and 193 each coordinate L-citrulline. Aspartate 195 serves as a coordination point for ATP. Residues threonine 202, glutamate 204, and glutamate 281 each contribute to the L-citrulline site.

This sequence belongs to the argininosuccinate synthase family. Type 2 subfamily. In terms of assembly, homotetramer.

Its subcellular location is the cytoplasm. It catalyses the reaction L-citrulline + L-aspartate + ATP = 2-(N(omega)-L-arginino)succinate + AMP + diphosphate + H(+). The protein operates within amino-acid biosynthesis; L-arginine biosynthesis; L-arginine from L-ornithine and carbamoyl phosphate: step 2/3. In Histophilus somni (strain 2336) (Haemophilus somnus), this protein is Argininosuccinate synthase.